The primary structure comprises 686 residues: ATP-dependent zinc metalloprotease FtsH 1 (686 aa).

The Cytoplasmic portion of the chain corresponds to 1-33; that stretch reads MCFCIVSSPEAMHSNADSPSSGPGLQPVWTTLR. A helical membrane pass occupies residues 34 to 54; it reads SPYVFWIGGAILLALLVHLGI. Residues 55 to 164 lie on the Periplasmic side of the membrane; it reads KWQQASAPVR…TFAATQESDW (110 aa). A helical transmembrane segment spans residues 165–185; it reads VGTLLLWGLPLGLIVGIWLFF. Over 186–686 the chain is Cytoplasmic; that stretch reads MRRMATGGRE…AEGASPSSQG (501 aa). 257 to 264 is a binding site for ATP; the sequence is GPPGTGKT. H479 provides a ligand contact to Zn(2+). The active site involves E480. Zn(2+) contacts are provided by H483 and D555. The disordered stretch occupies residues 661–686; that stretch reads YAWLKEGDGTSRNSASAEGASPSSQG. A compositionally biased stretch (polar residues) spans 670–686; it reads TSRNSASAEGASPSSQG.

The protein in the central section; belongs to the AAA ATPase family. In the C-terminal section; belongs to the peptidase M41 family. As to quaternary structure, homohexamer. Zn(2+) is required as a cofactor.

The protein resides in the cell inner membrane. In terms of biological role, acts as a processive, ATP-dependent zinc metallopeptidase for both cytoplasmic and membrane proteins. Plays a role in the quality control of integral membrane proteins. This is ATP-dependent zinc metalloprotease FtsH 1 from Salinibacter ruber (strain M8).